Consider the following 101-residue polypeptide: MWVIAMFDLPTDTPKARKAYARFRKDLLEDGFTMMQYSVYSRHCASIENAEVHVKRMGAVVPAQGEVRFLTITDNQFGRIKVYVGKKRQPTTQSPSQLQLF.

Aspartate 8 provides a ligand contact to Mg(2+).

It belongs to the CRISPR-associated endoribonuclease Cas2 protein family. In terms of assembly, homodimer, forms a heterotetramer with a Cas1 homodimer. Requires Mg(2+) as cofactor.

Its function is as follows. CRISPR (clustered regularly interspaced short palindromic repeat), is an adaptive immune system that provides protection against mobile genetic elements (viruses, transposable elements and conjugative plasmids). CRISPR clusters contain sequences complementary to antecedent mobile elements and target invading nucleic acids. CRISPR clusters are transcribed and processed into CRISPR RNA (crRNA). Functions as a ssRNA-specific endoribonuclease. Involved in the integration of spacer DNA into the CRISPR cassette. The protein is CRISPR-associated endoribonuclease Cas2 of Parvibaculum lavamentivorans (strain DS-1 / DSM 13023 / NCIMB 13966).